A 96-amino-acid chain; its full sequence is Beta-defensin 20 (96 aa).

Positions methionine 1–proline 21 are cleaved as a signal peptide. Disulfide bonds link cysteine 24/cysteine 52, cysteine 32/cysteine 46, and cysteine 36/cysteine 53.

Belongs to the beta-defensin family.

Its subcellular location is the secreted. Its function is as follows. Has antibacterial activity. The protein is Beta-defensin 20 (Defb20) of Rattus norvegicus (Rat).